The chain runs to 142 residues: HTH-type transcriptional regulator MntR (142 aa).

An HTH dtxR-type domain is found at 1 to 63; it reads MPTPSMEDYI…YEKYRGLVLT (63 aa). Asp8, Glu11, His77, Glu99, Glu102, and His103 together coordinate Mn(2+).

It belongs to the DtxR/MntR family. As to quaternary structure, homodimer.

It is found in the cytoplasm. Its activity is regulated as follows. DNA binding is strongly activated by Mn(2+). In terms of biological role, central regulator of manganese homeostasis. The polypeptide is HTH-type transcriptional regulator MntR (Bacillus cereus (strain ATCC 14579 / DSM 31 / CCUG 7414 / JCM 2152 / NBRC 15305 / NCIMB 9373 / NCTC 2599 / NRRL B-3711)).